A 272-amino-acid chain; its full sequence is Flt3 receptor-interacting lectin (272 aa).

Positions 1-8 (MFPSKVKS) are cleaved as a signal peptide. Alpha-D-mannopyranose is bound by residues D94 and G112. N125 and N131 each carry an N-linked (GlcNAc...) asparagine glycan. Alpha-D-mannopyranose contacts are provided by residues N152 and 237-238 (QD).

The protein belongs to the leguminous lectin family. As to quaternary structure, dimer (alpha/beta)2. Tetramer (alpha/beta)4. In terms of processing, glycosylated at Asn-125 by either a paucimannose type N-glycan (alpha-4) or a single N-acetylglucosamine (alpha-3). Glycosylated at Asn-131 by a paucimannose type N-glycan (alpha-2, alpha-3 and alpha-4). In alpha-2, Asn-125 is deamidated to an Asp, possibly due to the action of intrinsic peptide N-glycosidase (PGNase).

It localises to the protein storage vacuole lumen. Mannose-binding lectin. Accommodates most effectively a non-reducing terminal alpha-d-mannosyl unit. Strongly precipitates murine IgM but not IgG. The chain is Flt3 receptor-interacting lectin from Lablab purpureus (Hyacinth bean).